Reading from the N-terminus, the 412-residue chain is Chorismate synthase (412 aa).

Arginine 40 and arginine 46 together coordinate NADP(+). Residues 135–137 (RAS), 256–257 (QA), glycine 300, 315–319 (KPIST), and arginine 341 each bind FMN. Residues 391–404 (QREPRQESSDEQPA) show a composition bias toward basic and acidic residues. The tract at residues 391–412 (QREPRQESSDEQPARRAANTAG) is disordered.

This sequence belongs to the chorismate synthase family. Homotetramer. Requires FMNH2 as cofactor.

It catalyses the reaction 5-O-(1-carboxyvinyl)-3-phosphoshikimate = chorismate + phosphate. It functions in the pathway metabolic intermediate biosynthesis; chorismate biosynthesis; chorismate from D-erythrose 4-phosphate and phosphoenolpyruvate: step 7/7. Its function is as follows. Catalyzes the anti-1,4-elimination of the C-3 phosphate and the C-6 proR hydrogen from 5-enolpyruvylshikimate-3-phosphate (EPSP) to yield chorismate, which is the branch point compound that serves as the starting substrate for the three terminal pathways of aromatic amino acid biosynthesis. This reaction introduces a second double bond into the aromatic ring system. In Mycobacteroides abscessus (strain ATCC 19977 / DSM 44196 / CCUG 20993 / CIP 104536 / JCM 13569 / NCTC 13031 / TMC 1543 / L948) (Mycobacterium abscessus), this protein is Chorismate synthase.